Consider the following 92-residue polypeptide: MADERAPQRSTSGPRKKRPFQRRKVCRFCADKQVTIDYKDPRTLRYFVSERGKIIPRRISGNCSKHQREITEAIKRARNIALLPIAGSHATA.

A disordered region spans residues 1–22 (MADERAPQRSTSGPRKKRPFQR).

Belongs to the bacterial ribosomal protein bS18 family. In terms of assembly, part of the 30S ribosomal subunit. Forms a tight heterodimer with protein bS6.

Binds as a heterodimer with protein bS6 to the central domain of the 16S rRNA, where it helps stabilize the platform of the 30S subunit. The protein is Small ribosomal subunit protein bS18 of Citrifermentans bemidjiense (strain ATCC BAA-1014 / DSM 16622 / JCM 12645 / Bem) (Geobacter bemidjiensis).